A 512-amino-acid polypeptide reads, in one-letter code: Cytochrome P450 77A4 (512 aa).

A helical membrane pass occupies residues 9-29; that stretch reads PTSLDFTFFAIIISGFVFIIT. Cys456 contacts heme.

This sequence belongs to the cytochrome P450 family. It depends on heme as a cofactor.

The protein resides in the membrane. In terms of biological role, catalyzes the epoxidation of physiological unsaturated fatty acids in vitro. Can use laurate, oleate, linoleate, linolenate and vernolate as substrate. This chain is Cytochrome P450 77A4 (CYP77A4), found in Arabidopsis thaliana (Mouse-ear cress).